Reading from the N-terminus, the 71-residue chain is Exodeoxyribonuclease 7 small subunit (71 aa).

Belongs to the XseB family. Heterooligomer composed of large and small subunits.

It localises to the cytoplasm. The catalysed reaction is Exonucleolytic cleavage in either 5'- to 3'- or 3'- to 5'-direction to yield nucleoside 5'-phosphates.. Its function is as follows. Bidirectionally degrades single-stranded DNA into large acid-insoluble oligonucleotides, which are then degraded further into small acid-soluble oligonucleotides. This Streptococcus uberis (strain ATCC BAA-854 / 0140J) protein is Exodeoxyribonuclease 7 small subunit.